A 328-amino-acid chain; its full sequence is Pleckstrin homology domain protein OPY1 (328 aa).

Positions 19–52 (NLIKKPSTSQNKTPTAQSSSGNNGAADGAPQGYH) are disordered. Polar residues predominate over residues 24–41 (PSTSQNKTPTAQSSSGNN). Positions 213 to 328 (AEHQVCSGIL…IRKKLKAENI (116 aa)) are required for targeting to the cell membrane. The 104-residue stretch at 215 to 318 (HQVCSGILYT…WIINFKSGIL (104 aa)) folds into the PH domain.

Interacts with MSS4 (via N-terminus); to negatively regulate MSS4 kinase activity.

It is found in the cell membrane. The protein localises to the cytoplasm. Functionally, binds phosphatidylinositol 4,5-bisphosphate (PtdIns(4,5)P2/PIP2) at the cell membrane. Negatively regulates the activity of phosphatidylinositol 4-phosphate 5-kinase MSS4. The polypeptide is Pleckstrin homology domain protein OPY1 (OPY1) (Saccharomyces cerevisiae (strain ATCC 204508 / S288c) (Baker's yeast)).